Reading from the N-terminus, the 387-residue chain is 26S proteasome regulatory subunit 6B homolog (387 aa).

Position 175 to 182 (175 to 182) interacts with ATP; the sequence is GPPGTGKT.

This sequence belongs to the AAA ATPase family. As to quaternary structure, the 26S proteasome consists of a 20S proteasome core and two 19S regulatory subunits. The 20S proteasome core is composed of 28 subunits that are arranged in four stacked rings, resulting in a barrel-shaped structure. The two end rings are each formed by seven alpha subunits, and the two central rings are each formed by seven beta subunits. The catalytic chamber with the active sites is on the inside of the barrel.

The protein resides in the cytoplasm. It localises to the nucleus. In terms of biological role, acts as a regulatory subunit of the 26S proteasome which degrades poly-ubiquitinated proteins in the cytoplasm and in the nucleus. It is essential for the regulated turnover of proteins and for the removal of misfolded proteins. The proteasome is a multicatalytic proteinase complex that is characterized by its ability to cleave peptides with Arg, Phe, Tyr, Leu, and Glu adjacent to the leaving group at neutral or slightly basic pH. This Encephalitozoon cuniculi (strain GB-M1) (Microsporidian parasite) protein is 26S proteasome regulatory subunit 6B homolog.